The primary structure comprises 236 residues: uncharacterized protein (236 aa).

This sequence to E.coli YfjP and YkfA.

This is an uncharacterized protein from Escherichia coli (strain K12).